We begin with the raw amino-acid sequence, 288 residues long: MNIILSRDSQVRVMEDTVTNAEKSFGQFCSLLAAYTRKTARLRDKADQLVKQLIDFANTENPEMRATLRNFAEDLAKVQDYRQAEVERLETKVINPLKLYGVQIKQTRAEIKKFKSVRNNEIKQLEKLEKLRQKSPSDRQTISQAETSVQRASVDASRTSHQLEETVDTFQKQKLKDIQKIFSDFVTIEMVFHAKAVEVYSSAFQTLESYDLEKDLEDFRAKMHGVYGRYDARPPLMDTTLSPALPWSLAQSAQSTIRSQRKEAVSEDDSAEEDPVEDLRGQAQRLNQ.

Residues 6–217 are BAR-like; it reads SRDSQVRVME…ESYDLEKDLE (212 aa). 2 disordered regions span residues 133–157 and 256–288; these read QKSP…VDAS and TIRS…RLNQ. Residues 138–157 are compositionally biased toward polar residues; sequence DRQTISQAETSVQRASVDAS. The segment covering 266–276 has biased composition (acidic residues); the sequence is SEDDSAEEDPV.

This sequence belongs to the CIBAR family. In terms of assembly, homodimer (via BAR-like domain). Heterodimer (via BAR-like domain) with FAM92A. Interacts with CBY1.

Its subcellular location is the cytoplasm. The protein resides in the cytoskeleton. It is found in the microtubule organizing center. It localises to the centrosome. The protein localises to the centriole. Its subcellular location is the cilium basal body. Functionally, may play a role in ciliogenesis. In cooperation with CBY1 may facilitate ciliogenesis likely by the recruitment and fusion of endosomal vesicles at distal appendages during early stages of ciliogenesis. The chain is CBY1-interacting BAR domain-containing protein 2 (CIBAR2) from Bos taurus (Bovine).